Here is a 159-residue protein sequence, read N- to C-terminus: CASP-like protein 5C1 (159 aa).

Topologically, residues 1–6 (MDNGDR) are cytoplasmic. The helical transmembrane segment at 7–29 (SGAGAGAVGSAGSLGLRVGQAVF) threads the bilayer. At 30–48 (SSASLLFMSVGVEFFSYTA) the chain is on the extracellular side. Residues 49-69 (FCFLVTIMGLVIPWSCTLAMI) form a helical membrane-spanning segment. Residues 70 to 94 (DVYSVFVGCPLRVPGVMVIVVVGDC) lie on the Cytoplasmic side of the membrane. A helical transmembrane segment spans residues 95–117 (ALSIVSFAAACSSAAVIDLLLQL). The Extracellular portion of the chain corresponds to 118-134 (HGSHSSPTFCGRYQLSA). Residues 135–155 (MMAFLSWLLMAASATFNLWFV) traverse the membrane as a helical segment. The Cytoplasmic portion of the chain corresponds to 156–159 (ASRW).

Belongs to the Casparian strip membrane proteins (CASP) family. As to quaternary structure, homodimer and heterodimers.

The protein localises to the cell membrane. The protein is CASP-like protein 5C1 of Zea mays (Maize).